A 131-amino-acid polypeptide reads, in one-letter code: Small ribosomal subunit protein uS8 (131 aa).

The protein belongs to the universal ribosomal protein uS8 family. As to quaternary structure, part of the 30S ribosomal subunit. Contacts proteins S5 and S12.

In terms of biological role, one of the primary rRNA binding proteins, it binds directly to 16S rRNA central domain where it helps coordinate assembly of the platform of the 30S subunit. In Pelodictyon phaeoclathratiforme (strain DSM 5477 / BU-1), this protein is Small ribosomal subunit protein uS8.